Here is a 429-residue protein sequence, read N- to C-terminus: Glucose-1-phosphate adenylyltransferase (429 aa).

Residues Gly-162, 177-178 (EK), and Ser-209 contribute to the alpha-D-glucose 1-phosphate site.

Belongs to the bacterial/plant glucose-1-phosphate adenylyltransferase family. In terms of assembly, homotetramer.

It catalyses the reaction alpha-D-glucose 1-phosphate + ATP + H(+) = ADP-alpha-D-glucose + diphosphate. It functions in the pathway glycan biosynthesis; glycogen biosynthesis. Its function is as follows. Involved in the biosynthesis of ADP-glucose, a building block required for the elongation reactions to produce glycogen. Catalyzes the reaction between ATP and alpha-D-glucose 1-phosphate (G1P) to produce pyrophosphate and ADP-Glc. This chain is Glucose-1-phosphate adenylyltransferase, found in Rippkaea orientalis (strain PCC 8801 / RF-1) (Cyanothece sp. (strain PCC 8801)).